Reading from the N-terminus, the 215-residue chain is Pyridoxine/pyridoxamine 5'-phosphate oxidase (215 aa).

Substrate contacts are provided by residues 9–12 (RRDY) and lysine 69. FMN is bound by residues 64–69 (RVLLLK), 79–80 (FT), lysine 86, and glutamine 108. Residues tyrosine 126, arginine 130, and serine 134 each contribute to the substrate site. FMN contacts are provided by residues 143 to 144 (QS) and tryptophan 188. Position 194-196 (194-196 (RLH)) interacts with substrate. Arginine 198 lines the FMN pocket.

The protein belongs to the pyridoxamine 5'-phosphate oxidase family. Homodimer. It depends on FMN as a cofactor.

It carries out the reaction pyridoxamine 5'-phosphate + O2 + H2O = pyridoxal 5'-phosphate + H2O2 + NH4(+). The catalysed reaction is pyridoxine 5'-phosphate + O2 = pyridoxal 5'-phosphate + H2O2. Its pathway is cofactor metabolism; pyridoxal 5'-phosphate salvage; pyridoxal 5'-phosphate from pyridoxamine 5'-phosphate: step 1/1. It functions in the pathway cofactor metabolism; pyridoxal 5'-phosphate salvage; pyridoxal 5'-phosphate from pyridoxine 5'-phosphate: step 1/1. Its function is as follows. Catalyzes the oxidation of either pyridoxine 5'-phosphate (PNP) or pyridoxamine 5'-phosphate (PMP) into pyridoxal 5'-phosphate (PLP). The chain is Pyridoxine/pyridoxamine 5'-phosphate oxidase from Pseudomonas syringae pv. syringae (strain B728a).